We begin with the raw amino-acid sequence, 1941 residues long: Integrin beta-like protein B (1941 aa).

The signal sequence occupies residues Met1–Ala20. The Extracellular segment spans residues Thr21–Thr1871. The 38-residue stretch at Tyr420 to Ser457 folds into the EGF-like domain. 2 disulfides stabilise this stretch: Cys430–Cys445 and Cys447–Cys456. One can recognise a VWFA domain in the interval Asp513–Leu696. N-linked (GlcNAc...) asparagine glycosylation is found at Asn1400, Asn1505, Asn1530, Asn1606, Asn1652, Asn1738, Asn1777, Asn1848, Asn1866, and Asn1869. Residues Val1872–Trp1892 traverse the membrane as a helical segment. The Cytoplasmic portion of the chain corresponds to Lys1893 to Leu1941. The interval Met1921–Leu1941 is disordered.

This sequence belongs to the SIB family. As to quaternary structure, interacts with talA/talin.

It is found in the membrane. Its function is as follows. Implicated in cellular adhesion. In Dictyostelium discoideum (Social amoeba), this protein is Integrin beta-like protein B (sibB).